Reading from the N-terminus, the 182-residue chain is Small ribosomal subunit protein uS9 (182 aa).

It belongs to the universal ribosomal protein uS9 family.

The polypeptide is Small ribosomal subunit protein uS9 (Corynebacterium glutamicum (strain R)).